The sequence spans 349 residues: Inositol 2-dehydrogenase (349 aa).

The protein belongs to the Gfo/Idh/MocA family. Homotetramer.

The catalysed reaction is myo-inositol + NAD(+) = scyllo-inosose + NADH + H(+). In terms of biological role, involved in the oxidation of myo-inositol (MI) to 2-keto-myo-inositol (2KMI or 2-inosose). The chain is Inositol 2-dehydrogenase from Mycolicibacterium gilvum (strain PYR-GCK) (Mycobacterium gilvum (strain PYR-GCK)).